Here is a 338-residue protein sequence, read N- to C-terminus: Methionyl-tRNA formyltransferase (338 aa).

110-113 (SLLP) contributes to the (6S)-5,6,7,8-tetrahydrofolate binding site.

This sequence belongs to the Fmt family.

The catalysed reaction is L-methionyl-tRNA(fMet) + (6R)-10-formyltetrahydrofolate = N-formyl-L-methionyl-tRNA(fMet) + (6S)-5,6,7,8-tetrahydrofolate + H(+). Functionally, attaches a formyl group to the free amino group of methionyl-tRNA(fMet). The formyl group appears to play a dual role in the initiator identity of N-formylmethionyl-tRNA by promoting its recognition by IF2 and preventing the misappropriation of this tRNA by the elongation apparatus. The chain is Methionyl-tRNA formyltransferase from Parasynechococcus marenigrum (strain WH8102).